The chain runs to 462 residues: UDP-N-acetylmuramoylalanine--D-glutamate ligase (462 aa).

117–123 lines the ATP pocket; that stretch reads GTNGKTT.

This sequence belongs to the MurCDEF family.

It localises to the cytoplasm. The enzyme catalyses UDP-N-acetyl-alpha-D-muramoyl-L-alanine + D-glutamate + ATP = UDP-N-acetyl-alpha-D-muramoyl-L-alanyl-D-glutamate + ADP + phosphate + H(+). Its pathway is cell wall biogenesis; peptidoglycan biosynthesis. Functionally, cell wall formation. Catalyzes the addition of glutamate to the nucleotide precursor UDP-N-acetylmuramoyl-L-alanine (UMA). The chain is UDP-N-acetylmuramoylalanine--D-glutamate ligase from Parasynechococcus marenigrum (strain WH8102).